A 163-amino-acid chain; its full sequence is Phosphopantetheine adenylyltransferase (163 aa).

S11 contacts substrate. ATP-binding positions include 11–12 (SF) and H19. 3 residues coordinate substrate: K43, L75, and R89. ATP contacts are provided by residues 90 to 92 (GLR), E100, and 125 to 131 (YSFLSSS).

It belongs to the bacterial CoaD family. In terms of assembly, homohexamer. Mg(2+) is required as a cofactor.

It localises to the cytoplasm. The catalysed reaction is (R)-4'-phosphopantetheine + ATP + H(+) = 3'-dephospho-CoA + diphosphate. The protein operates within cofactor biosynthesis; coenzyme A biosynthesis; CoA from (R)-pantothenate: step 4/5. In terms of biological role, reversibly transfers an adenylyl group from ATP to 4'-phosphopantetheine, yielding dephospho-CoA (dPCoA) and pyrophosphate. This chain is Phosphopantetheine adenylyltransferase, found in Lysinibacillus sphaericus (strain C3-41).